We begin with the raw amino-acid sequence, 494 residues long: MRSASSLYAAIDLGSNSFHMLVVREVAGSIQTIARIKRKVRLAAGLDADNNLSAEAMDRGWQCLRLFSEQLQDIPPEQIRVVATATLRIAANAGSFLAQAQKLLGCPVNVISGEEEARLIYQGVSHTTGGSDKRLVVDIGGGSTELVTGRGSQPTTLYSLSMGCVTWLERYFSDRQLGKVNFEQAEQAARAMIRPIADSLKAQGWQVCVGASGTVQALQEIMMAQGMDERITLNKLQQLKQRAIECGKLEELEIEGLTLERALVFPSGLSILIAIFSELNISSMTLAGGALREGLLYGMLPLPVDRDIRSRTLHDVQRRFSVDPEQAERVRQLADSFARQVSLQWKLDDRSRELLGSACLLHEIGLSVDFRQAPQHAAYLVRYLDLPGFTPAQKKLLATLLQNQVGNIDLPLLSQQNALLPRIAERLSRLLRLAIIFASRRRDDRLPAVRLQADDDNLTVTLPSGWLEAHPLRAELLEQEARWQGYVHWPLIIA.

The protein belongs to the GppA/Ppx family. GppA subfamily.

It carries out the reaction guanosine 3'-diphosphate 5'-triphosphate + H2O = guanosine 3',5'-bis(diphosphate) + phosphate + H(+). It participates in purine metabolism; ppGpp biosynthesis; ppGpp from GTP: step 2/2. Its function is as follows. Catalyzes the conversion of pppGpp to ppGpp. Guanosine pentaphosphate (pppGpp) is a cytoplasmic signaling molecule which together with ppGpp controls the 'stringent response', an adaptive process that allows bacteria to respond to amino acid starvation, resulting in the coordinated regulation of numerous cellular activities. This chain is Guanosine-5'-triphosphate,3'-diphosphate pyrophosphatase, found in Erwinia tasmaniensis (strain DSM 17950 / CFBP 7177 / CIP 109463 / NCPPB 4357 / Et1/99).